Reading from the N-terminus, the 184-residue chain is Glutathione-regulated potassium-efflux system ancillary protein KefG (184 aa).

The protein belongs to the NAD(P)H dehydrogenase (quinone) family. KefG subfamily. Interacts with KefB.

It is found in the cell inner membrane. The enzyme catalyses a quinone + NADH + H(+) = a quinol + NAD(+). It catalyses the reaction a quinone + NADPH + H(+) = a quinol + NADP(+). Regulatory subunit of a potassium efflux system that confers protection against electrophiles. Required for full activity of KefB. This chain is Glutathione-regulated potassium-efflux system ancillary protein KefG, found in Escherichia coli O8 (strain IAI1).